The primary structure comprises 146 residues: Catabolic 3-dehydroquinase (146 aa).

Tyrosine 24 acts as the Proton acceptor in catalysis. Substrate contacts are provided by asparagine 78, histidine 84, and aspartate 91. Residue histidine 104 is the Proton donor of the active site. Residues 105 to 106 and arginine 115 contribute to the substrate site; that span reads IT.

This sequence belongs to the type-II 3-dehydroquinase family. In terms of assembly, homododecamer. Adopts a ring-like structure, composed of an arrangement of two hexameric rings stacked on top of one another.

The enzyme catalyses 3-dehydroquinate = 3-dehydroshikimate + H2O. Its pathway is aromatic compound metabolism; 3,4-dihydroxybenzoate biosynthesis; 3,4-dihydroxybenzoate from 3-dehydroquinate: step 1/2. Functionally, is involved in the catabolism of quinate. Allows the utilization of quinate as carbon source via the beta-ketoadipate pathway. The chain is Catabolic 3-dehydroquinase from Candida tropicalis (strain ATCC MYA-3404 / T1) (Yeast).